Reading from the N-terminus, the 286-residue chain is Glucose import system permease protein GlcT (286 aa).

A run of 6 helical transmembrane segments spans residues 6–26 (TIILVAPTAIFSAILLYLVIW), 71–91 (VILVVIGNILGIFIAALLYFL), 103–123 (IVIYPLSISMAVNGLIWLWLF), 154–174 (LVLVSVWAYTGIAALFYLAGF), 199–219 (ILIPNSLNSFIIATALLFLFS), and 260–280 (VATMITLIATIIIIPYALTVI). The 213-residue stretch at 63–275 (LLHSIELSVI…LIATIIIIPY (213 aa)) folds into the ABC transmembrane type-1 domain.

The protein belongs to the binding-protein-dependent transport system permease family. As to quaternary structure, the complex is composed of two ATP-binding proteins (GlcV), two transmembrane proteins (GlcT and GlcU) and a solute-binding protein (GlcS).

It is found in the cell membrane. Its function is as follows. Part of the ABC transporter complex GlcSTUV involved in glucose uptake. Responsible for the translocation of the substrate across the membrane. The sequence is that of Glucose import system permease protein GlcT from Saccharolobus solfataricus (strain ATCC 35092 / DSM 1617 / JCM 11322 / P2) (Sulfolobus solfataricus).